A 227-amino-acid polypeptide reads, in one-letter code: Urease accessory protein UreF (227 aa).

Belongs to the UreF family. UreD, UreF and UreG form a complex that acts as a GTP-hydrolysis-dependent molecular chaperone, activating the urease apoprotein by helping to assemble the nickel containing metallocenter of UreC. The UreE protein probably delivers the nickel.

It localises to the cytoplasm. Required for maturation of urease via the functional incorporation of the urease nickel metallocenter. The protein is Urease accessory protein UreF of Shewanella halifaxensis (strain HAW-EB4).